A 442-amino-acid chain; its full sequence is Type 3 secretion system ATPase (442 aa).

173–178 (GVGKST) is a binding site for ATP.

This sequence belongs to the ATPase alpha/beta chains family. T3SS ATPase subfamily. As to quaternary structure, the core secretion machinery of the T3SS is composed of approximately 20 different proteins, including cytoplasmic components, a base, an export apparatus and a needle. This subunit is part of the cytosolic complex. Forms homohexamers.

The protein resides in the cytoplasm. The enzyme catalyses ATP + H2O + cellular proteinSide 1 = ADP + phosphate + cellular proteinSide 2.. Functionally, ATPase component of the type III secretion system (T3SS), also called injectisome, which is used to inject bacterial effector proteins into eukaryotic host cells. Acts as a molecular motor to provide the energy that is required for the export of proteins. Required for type III secretion apparatus (T3SA) formation, proper protein secretion, host cell invasion and virulence. May play a critical role in T3SS substrate recognition, disassembly of the effector/chaperone complex and unfolding of the effector in an ATP-dependent manner prior to secretion. This chain is Type 3 secretion system ATPase, found in Xanthomonas euvesicatoria.